A 72-amino-acid chain; its full sequence is Mitochondrial import receptor subunit TOM7-1 (72 aa).

Topologically, residues 2–41 are cytoplasmic; it reads LKPKGKNTKKAAAADEDDGAVAVVGKFVKEWGTWTAKKAK. The chain crosses the membrane as a helical span at residues 42–59; sequence VITHYGFIPLVIIIGMNS. The Mitochondrial intermembrane segment spans residues 60 to 72; the sequence is EPKPSLSQLLSPV.

Belongs to the Tom7 family. As to quaternary structure, forms part of the preprotein translocase complex of the outer mitochondrial membrane (TOM complex).

It is found in the mitochondrion outer membrane. Seems to act as a modulator of the dynamics of the mitochondrial protein transport machinery. Seems to promote the dissociation of subunits of the outer membrane translocase. This chain is Mitochondrial import receptor subunit TOM7-1 (TOM7-1), found in Solanum tuberosum (Potato).